A 358-amino-acid polypeptide reads, in one-letter code: Peptide chain release factor 1 (358 aa).

The residue at position 232 (Gln232) is an N5-methylglutamine.

It belongs to the prokaryotic/mitochondrial release factor family. In terms of processing, methylated by PrmC. Methylation increases the termination efficiency of RF1.

Its subcellular location is the cytoplasm. In terms of biological role, peptide chain release factor 1 directs the termination of translation in response to the peptide chain termination codons UAG and UAA. The polypeptide is Peptide chain release factor 1 (Acidobacterium capsulatum (strain ATCC 51196 / DSM 11244 / BCRC 80197 / JCM 7670 / NBRC 15755 / NCIMB 13165 / 161)).